Reading from the N-terminus, the 157-residue chain is Ribosome maturation factor RimP (157 aa).

This sequence belongs to the RimP family.

It is found in the cytoplasm. In terms of biological role, required for maturation of 30S ribosomal subunits. This Ligilactobacillus salivarius (strain UCC118) (Lactobacillus salivarius) protein is Ribosome maturation factor RimP.